The chain runs to 140 residues: Acyl carrier protein 1, chloroplastic (140 aa).

The N-terminal 56 residues, 1–56, are a transit peptide targeting the chloroplast; that stretch reads MASAAAGASICIKSASFSPLAPGRISSLRSVSLPVSRKSFPSLKSSKSSFALRVSC. Residues 60–135 form the Carrier domain; sequence PETVAKVCGI…DAADLIEKLM (76 aa). At Ser-95 the chain carries O-(pantetheine 4'-phosphoryl)serine.

Belongs to the acyl carrier protein (ACP) family. 4'-phosphopantetheine is transferred from CoA to a specific serine of apo-ACP by acpS. This modification is essential for activity because fatty acids are bound in thioester linkage to the sulfhydryl of the prosthetic group.

Its subcellular location is the plastid. It is found in the chloroplast. It functions in the pathway lipid metabolism; fatty acid biosynthesis. Its function is as follows. Carrier of the growing fatty acid chain in fatty acid biosynthesis. This is Acyl carrier protein 1, chloroplastic (ACL1.1) from Cuphea lanceolata (Cigar flower).